A 323-amino-acid chain; its full sequence is Aquaporin-4 (323 aa).

Residues 1–36 (MSDRPTARRWGKCGPLCTRENIMVAFKGVWTQAFWK) are Cytoplasmic-facing. S-palmitoyl cysteine attachment occurs at residues Cys13 and Cys17. A helical transmembrane segment spans residues 37-57 (AVTAEFLAMLIFVLLSLGSTI). The Extracellular portion of the chain corresponds to 58–69 (NWGGTEKPLPVD). A helical membrane pass occupies residues 70–89 (MVLISLCFGLSIATMVQCFG). The Cytoplasmic segment spans residues 90 to 93 (HISG). An intramembrane region (discontinuously helical) is located at residues 94–101 (GHINPAVT). An NPA 1 motif is present at residues 97–99 (NPA). Topologically, residues 102-115 (VAMVCTRKISIAKS) are cytoplasmic. A Phosphoserine; by PKG modification is found at Ser111. A helical transmembrane segment spans residues 116–136 (VFYIAAQCLGAIIGAGILYLV). Topologically, residues 137-155 (TPPSVVGGLGVTMVHGNLT) are extracellular. Asn153 is a glycosylation site (N-linked (GlcNAc...) asparagine). The chain crosses the membrane as a helical span at residues 156–176 (AGHGLLVELIITFQLVFTIFA). At 177–184 (SCDSKRTD) the chain is on the cytoplasmic side. Phosphoserine; by PKC is present on Ser180. The chain crosses the membrane as a helical span at residues 185–205 (VTGSIALAIGFSVAIGHLFAI). Asn206 carries N-linked (GlcNAc...) asparagine glycosylation. At 206-208 (NYT) the chain is on the extracellular side. Positions 209–222 (GASMNPARSFGPAV) form an intramembrane region, discontinuously helical. The NPA 2 signature appears at 213-215 (NPA). Over 223–231 (IMGNWENHW) the chain is Extracellular. Residues 232 to 252 (IYWVGPIIGAVLAGGLYEYVF) traverse the membrane as a helical segment. Residues 253–323 (CPDVEFKRRF…DQSGEVLSSV (71 aa)) lie on the Cytoplasmic side of the membrane. Residues Ser276 and Ser285 each carry the phosphoserine modification. Thr289 is modified (phosphothreonine). Ser321 carries the phosphoserine modification.

This sequence belongs to the MIP/aquaporin (TC 1.A.8) family. In terms of assembly, homotetramer. The tetramers can form oligomeric arrays in membranes. The size of the oligomers differs between tissues and is smaller in skeletal muscle than in brain. Interaction between AQP4 oligomeric arrays in close-by cells can contribute to cell-cell adhesion. Part of a complex containing MLC1, TRPV4, HEPACAM and ATP1B1. In terms of processing, phosphorylation by PKC at Ser-180 reduces conductance by 50%. Phosphorylation by PKG at Ser-111 in response to glutamate increases conductance by 40%. Post-translationally, isoform 2: Palmitoylated on its N-terminal region. Isoform 1: Not palmitoylated. Detected in skeletal muscle. Detected in stomach, along the glandular base region of the fundic gland (at protein level). Detected in brain, lung and skeletal muscle, and at much lower levels in heart and ovary.

Its subcellular location is the cell membrane. The protein localises to the basolateral cell membrane. It is found in the endosome membrane. It localises to the sarcolemma. The protein resides in the cell projection. It carries out the reaction H2O(in) = H2O(out). Functionally, forms a water-specific channel. Plays an important role in brain water homeostasis. It is involved in glymphatic solute transport and is required for a normal rate of water exchange across the blood brain interface. Required for normal levels of cerebrospinal fluid influx into the brain cortex and parenchyma along paravascular spaces that surround penetrating arteries, and for normal drainage of interstitial fluid along paravenous drainage pathways. Thereby, it is required for normal clearance of solutes from the brain interstitial fluid, including soluble beta-amyloid peptides derived from APP. Plays a redundant role in urinary water homeostasis and urinary concentrating ability. The polypeptide is Aquaporin-4 (AQP4) (Homo sapiens (Human)).